We begin with the raw amino-acid sequence, 601 residues long: Elongation factor 4 (601 aa).

The tr-type G domain maps to 5 to 187 (DKIRNFSIIA…SIVKDLPAPQ (183 aa)). GTP-binding positions include 17–22 (DHGKST) and 134–137 (NKVD).

It belongs to the TRAFAC class translation factor GTPase superfamily. Classic translation factor GTPase family. LepA subfamily.

Its subcellular location is the cell inner membrane. It catalyses the reaction GTP + H2O = GDP + phosphate + H(+). Its function is as follows. Required for accurate and efficient protein synthesis under certain stress conditions. May act as a fidelity factor of the translation reaction, by catalyzing a one-codon backward translocation of tRNAs on improperly translocated ribosomes. Back-translocation proceeds from a post-translocation (POST) complex to a pre-translocation (PRE) complex, thus giving elongation factor G a second chance to translocate the tRNAs correctly. Binds to ribosomes in a GTP-dependent manner. This Maridesulfovibrio salexigens (strain ATCC 14822 / DSM 2638 / NCIMB 8403 / VKM B-1763) (Desulfovibrio salexigens) protein is Elongation factor 4.